The following is a 73-amino-acid chain: Protein SlyX homolog (73 aa).

The protein belongs to the SlyX family.

This chain is Protein SlyX homolog, found in Histophilus somni (strain 129Pt) (Haemophilus somnus).